The chain runs to 201 residues: Small ribosomal subunit protein uS4 (201 aa).

The region spanning 91 to 155 (TRLDNVVYRA…STLPFQVARE (65 aa)) is the S4 RNA-binding domain.

The protein belongs to the universal ribosomal protein uS4 family. As to quaternary structure, part of the 30S ribosomal subunit. Contacts protein S5. The interaction surface between S4 and S5 is involved in control of translational fidelity.

Functionally, one of the primary rRNA binding proteins, it binds directly to 16S rRNA where it nucleates assembly of the body of the 30S subunit. In terms of biological role, with S5 and S12 plays an important role in translational accuracy. The chain is Small ribosomal subunit protein uS4 from Nocardia farcinica (strain IFM 10152).